The following is a 396-amino-acid chain: MPPKKGGDGIKPPPIIGRFGTSLKIGIVGLPNVGKSTFFNVLTNSQASAENFPFCTIDPNESRVPVPDERFDFLCQYHKPASKIPAFLNVVDIAGLVKGAHNGQGLGNAFLSHISACDGIFHLTRAFEDDDITHVEGSVDPVRDIEIIHEELQLKDEEMVGPIIDKLEKVAVRGGDKKLKPEYDIMCKVKSWVIDQKKPVRFYHDWNDKEIEVLNKHLFLTSKPMVYLVNLSEKDYIRKKNKWLIKIKEWVDKYDPGALVIPFSGALELRLQELSAEERQKYLEANMTQSALPKIIKAGFAALQLEYFFTAGPDEVRAWTIRKGTKAPQAAGKIHTDFEKGFIMAEVMKYEDFKEEGSENAVKAAGKYRQQGRNYIVEDGDIIFFKFNTPQQPKKK.

In terms of domain architecture, OBG-type G spans 23 to 283; the sequence is LKIGIVGLPN…LSAEERQKYL (261 aa). 32 to 37 is a binding site for ATP; sequence NVGKST. The Mg(2+) site is built by S36 and T56. Position 231 (L231) interacts with ATP. The Nuclear export signal motif lies at 267–274; the sequence is LELRLQEL. Position 294 is an N6-acetyllysine (K294). In terms of domain architecture, TGS spans 304 to 387; that stretch reads QLEYFFTAGP…EDGDIIFFKF (84 aa).

Belongs to the TRAFAC class OBG-HflX-like GTPase superfamily. OBG GTPase family. YchF/OLA1 subfamily. As to quaternary structure, monomer. Requires Mg(2+) as cofactor.

It localises to the cytoplasm. Its subcellular location is the nucleus. The protein localises to the nucleolus. Hydrolyzes ATP, and can also hydrolyze GTP with lower efficiency. Has lower affinity for GTP. This chain is Obg-like ATPase 1, found in Bos taurus (Bovine).